Reading from the N-terminus, the 366-residue chain is Ribosomal RNA large subunit methyltransferase M (366 aa).

S-adenosyl-L-methionine-binding positions include S187, 220–223 (SPGG), D239, D259, and D276. K305 acts as the Proton acceptor in catalysis.

Belongs to the class I-like SAM-binding methyltransferase superfamily. RNA methyltransferase RlmE family. RlmM subfamily. In terms of assembly, monomer.

The protein localises to the cytoplasm. It carries out the reaction cytidine(2498) in 23S rRNA + S-adenosyl-L-methionine = 2'-O-methylcytidine(2498) in 23S rRNA + S-adenosyl-L-homocysteine + H(+). In terms of biological role, catalyzes the 2'-O-methylation at nucleotide C2498 in 23S rRNA. This Tolumonas auensis (strain DSM 9187 / NBRC 110442 / TA 4) protein is Ribosomal RNA large subunit methyltransferase M.